A 233-amino-acid chain; its full sequence is tRNA (guanine-N(7)-)-methyltransferase (233 aa).

Positions 65, 90, 117, and 139 each coordinate S-adenosyl-L-methionine. The active site involves Asp139. Residues Lys143, Asp175, and 212-215 each bind substrate; that span reads TRYE.

This sequence belongs to the class I-like SAM-binding methyltransferase superfamily. TrmB family.

The catalysed reaction is guanosine(46) in tRNA + S-adenosyl-L-methionine = N(7)-methylguanosine(46) in tRNA + S-adenosyl-L-homocysteine. It participates in tRNA modification; N(7)-methylguanine-tRNA biosynthesis. Catalyzes the formation of N(7)-methylguanine at position 46 (m7G46) in tRNA. This is tRNA (guanine-N(7)-)-methyltransferase from Roseobacter denitrificans (strain ATCC 33942 / OCh 114) (Erythrobacter sp. (strain OCh 114)).